The sequence spans 336 residues: Tetraacyldisaccharide 4'-kinase (336 aa).

An ATP-binding site is contributed by T60–T67.

Belongs to the LpxK family.

The enzyme catalyses a lipid A disaccharide + ATP = a lipid IVA + ADP + H(+). Its pathway is glycolipid biosynthesis; lipid IV(A) biosynthesis; lipid IV(A) from (3R)-3-hydroxytetradecanoyl-[acyl-carrier-protein] and UDP-N-acetyl-alpha-D-glucosamine: step 6/6. Its function is as follows. Transfers the gamma-phosphate of ATP to the 4'-position of a tetraacyldisaccharide 1-phosphate intermediate (termed DS-1-P) to form tetraacyldisaccharide 1,4'-bis-phosphate (lipid IVA). This Vibrio cholerae serotype O1 (strain ATCC 39315 / El Tor Inaba N16961) protein is Tetraacyldisaccharide 4'-kinase.